The chain runs to 610 residues: Glutamine--fructose-6-phosphate aminotransferase [isomerizing] (610 aa).

Cys2 acts as the Nucleophile; for GATase activity in catalysis. The region spanning 2–219 (CGIVGAVAQR…EGDVAEITRR (218 aa)) is the Glutamine amidotransferase type-2 domain. SIS domains follow at residues 287 to 427 (ADEL…LRGM) and 459 to 600 (LAEG…VDQP). Lys605 acts as the For Fru-6P isomerization activity in catalysis.

Homodimer.

It localises to the cytoplasm. The enzyme catalyses D-fructose 6-phosphate + L-glutamine = D-glucosamine 6-phosphate + L-glutamate. Its function is as follows. Catalyzes the first step in hexosamine metabolism, converting fructose-6P into glucosamine-6P using glutamine as a nitrogen source. In Pectobacterium atrosepticum (strain SCRI 1043 / ATCC BAA-672) (Erwinia carotovora subsp. atroseptica), this protein is Glutamine--fructose-6-phosphate aminotransferase [isomerizing].